The primary structure comprises 235 residues: Glycerol-3-phosphate acyltransferase (235 aa).

A run of 6 helical transmembrane segments spans residues 4-24, 56-76, 94-114, 122-142, 152-172, and 191-211; these read LIAI…IMAG, AVTL…VAFF, LLAG…GFKG, AGML…IFLL, VASI…KYIF, and FHDS…LAIL.

It belongs to the PlsY family. In terms of assembly, probably interacts with PlsX.

The protein localises to the cell inner membrane. It carries out the reaction an acyl phosphate + sn-glycerol 3-phosphate = a 1-acyl-sn-glycero-3-phosphate + phosphate. It functions in the pathway lipid metabolism; phospholipid metabolism. Catalyzes the transfer of an acyl group from acyl-phosphate (acyl-PO(4)) to glycerol-3-phosphate (G3P) to form lysophosphatidic acid (LPA). This enzyme utilizes acyl-phosphate as fatty acyl donor, but not acyl-CoA or acyl-ACP. The sequence is that of Glycerol-3-phosphate acyltransferase from Chlorobium phaeobacteroides (strain DSM 266 / SMG 266 / 2430).